Here is a 794-residue protein sequence, read N- to C-terminus: MMQTKVQNKKRQVAFFILLMLWGEVGSESIQYSVLEETESGTFVANLTKDLGLRVGELASRGARVVFKGNRQHLQFDPQTHDLLLNEKLDREELCGSTELCVLPFQVLLENPLQFFQASLRVRDINDHAPEFPAREMLLKISEITMPGKIFPLKMAHDLDTGSNGLQRYTISSNPHFHVLTRNRSEGRKFPELVLDKPLDREEQPQLRLTLIALDGGSPPRSGTSEIQIQVLDINDNVPEFAEELYEAQVPENNPLGSLVITVSARDLDAGSFGKVSYALFQVDDVNQPFEINAITGEIRLRKALDFEEIQSYDLDVEATDGGGLSGKCSLLVRVLDVNDNAPELTMSFFISPIPENLPEIIVAVFSVSDADSGHNQQVICSIENNLPFLLRPTVENFYTLVTEGALDRESRAEYNITITVTDLGTPRLKTQQSITVQVSDVNDNAPAFTQTSYTLFVRENNSPALHIGSVSATDRDSGINAQVTYSLLPPQDPHLPLASLVSINADNGHLFALRSLDYEALQAFEFRVGATDRGSPALSSEALVRVLVLDANDNSPFVLYPLQNGSAPCTELVPRAAEPGYLVTKVVAVDGDSGQNAWLSYQLLKATELGLFGVWAHNGEVRTARLLSERDAAKHRLVVLVKDNGEPPRSATATLHVLLVDGFSQPYLPLPEAAPAPAQADLLTVYLVVALASVSSLFLFSVLLFVAVRLCRRSRAASVGRCSVPEGPFPEHLVDVNGTGTLSQSYQYKVCLTGGSETNEFKFLKPIMPNFPPQGTEREMEETPTSRNSFPFS.

The signal sequence occupies residues 1 to 27; it reads MMQTKVQNKKRQVAFFILLMLWGEVGS. Over 28 to 688 the chain is Extracellular; that stretch reads ESIQYSVLEE…AQADLLTVYL (661 aa). Cadherin domains are found at residues 34-132, 137-241, 246-345, 350-449, and 454-559; these read VLEE…APEF, MLLK…VPEF, YEAQ…APEL, FISP…APAF, and YTLF…SPFV. N-linked (GlcNAc...) asparagine glycosylation occurs at N46. Cysteines 95 and 101 form a disulfide. N183 carries N-linked (GlcNAc...) asparagine glycosylation. N416 carries an N-linked (GlcNAc...) asparagine glycan. N-linked (GlcNAc...) asparagine glycosylation is present at N565. The Cadherin 6 domain occupies 566–669; it reads GSAPCTELVP…LVDGFSQPYL (104 aa). A helical transmembrane segment spans residues 689 to 709; the sequence is VVALASVSSLFLFSVLLFVAV. The Cytoplasmic segment spans residues 710–794; it reads RLCRRSRAAS…PTSRNSFPFS (85 aa). The segment at 773–794 is disordered; sequence PPQGTEREMEETPTSRNSFPFS. The span at 784–794 shows a compositional bias: polar residues; the sequence is TPTSRNSFPFS.

In terms of assembly, forms homodimers in trans (molecules expressed by two different cells). Forms promiscuous heterodimers in cis (at the plasma membrane of the same cell) with other protocadherins.

It localises to the cell membrane. In terms of biological role, calcium-dependent cell-adhesion protein involved in cells self-recognition and non-self discrimination. Thereby, it is involved in the establishment and maintenance of specific neuronal connections in the brain. This Pan troglodytes (Chimpanzee) protein is Protocadherin beta-6.